We begin with the raw amino-acid sequence, 1410 residues long: DNA-directed RNA polymerase subunit beta' (1410 aa).

Zn(2+) is bound by residues Cys70, Cys72, Cys85, and Cys88. The Mg(2+) site is built by Asp460, Asp462, and Asp464. Residues Cys814, Cys888, Cys895, and Cys898 each coordinate Zn(2+).

The protein belongs to the RNA polymerase beta' chain family. As to quaternary structure, the RNAP catalytic core consists of 2 alpha, 1 beta, 1 beta' and 1 omega subunit. When a sigma factor is associated with the core the holoenzyme is formed, which can initiate transcription. The cofactor is Mg(2+). Zn(2+) is required as a cofactor.

It carries out the reaction RNA(n) + a ribonucleoside 5'-triphosphate = RNA(n+1) + diphosphate. Functionally, DNA-dependent RNA polymerase catalyzes the transcription of DNA into RNA using the four ribonucleoside triphosphates as substrates. The polypeptide is DNA-directed RNA polymerase subunit beta' (Shewanella denitrificans (strain OS217 / ATCC BAA-1090 / DSM 15013)).